The chain runs to 79 residues: Serine protease inhibitor Kazal-type 1 (79 aa).

The N-terminal stretch at Met1–Ala18 is a signal peptide. The region spanning Asn26–Cys79 is the Kazal-like domain. Disulfide bonds link Cys32-Cys61, Cys39-Cys58, and Cys47-Cys79.

Its subcellular location is the secreted. In terms of biological role, serine protease inhibitor which exhibits anti-trypsin activity. In the pancreas, protects against trypsin-catalyzed premature activation of zymogens. Functionally, in the male reproductive tract, binds to sperm heads where it modulates sperm capacitance by inhibiting calcium uptake and nitrogen oxide (NO) production. This is Serine protease inhibitor Kazal-type 1 from Rattus norvegicus (Rat).